Here is a 349-residue protein sequence, read N- to C-terminus: Probable sugar phosphate/phosphate translocator At5g25400 (349 aa).

Helical transmembrane passes span 15-35, 49-69, 89-109, 113-133, 141-161, 165-185, 205-225, 236-256, 263-283, and 286-306; these read IIIS…VIVY, FPIS…FLLI, VVPI…AYIY, SFIQ…GVLF, ETMM…YGEA, VWGV…LVMI, VAPC…FPIL, LIFG…FLLV, TMNV…WSVI, and TVTP…AYYN. An EamA domain is found at 38-156; it reads YILDKKMYDW…LSISFGVAIA (119 aa). The interval 321–349 is disordered; that stretch reads TAQQVDEETGRLLEEREGNEGGRKNEPED. The span at 328 to 349 shows a compositional bias: basic and acidic residues; sequence ETGRLLEEREGNEGGRKNEPED.

It belongs to the TPT transporter family. TPT (TC 2.A.7.9) subfamily.

Its subcellular location is the membrane. In Arabidopsis thaliana (Mouse-ear cress), this protein is Probable sugar phosphate/phosphate translocator At5g25400.